Reading from the N-terminus, the 417-residue chain is Gamma-glutamyl phosphate reductase (417 aa).

The protein belongs to the gamma-glutamyl phosphate reductase family.

Its subcellular location is the cytoplasm. The enzyme catalyses L-glutamate 5-semialdehyde + phosphate + NADP(+) = L-glutamyl 5-phosphate + NADPH + H(+). It functions in the pathway amino-acid biosynthesis; L-proline biosynthesis; L-glutamate 5-semialdehyde from L-glutamate: step 2/2. Functionally, catalyzes the NADPH-dependent reduction of L-glutamate 5-phosphate into L-glutamate 5-semialdehyde and phosphate. The product spontaneously undergoes cyclization to form 1-pyrroline-5-carboxylate. The protein is Gamma-glutamyl phosphate reductase of Escherichia fergusonii (strain ATCC 35469 / DSM 13698 / CCUG 18766 / IAM 14443 / JCM 21226 / LMG 7866 / NBRC 102419 / NCTC 12128 / CDC 0568-73).